Consider the following 350-residue polypeptide: DNA polymerase delta subunit 3 (350 aa).

The disordered stretch occupies residues 131–350 (EEKSKPLVRP…LESFFKRKAK (220 aa)). 2 stretches are compositionally biased toward basic and acidic residues: residues 146–162 (TTPEETTGRKSKSKDMG) and 172–195 (MKKDRDDKETSRQNELRKRKEENL). The residue at position 223 (threonine 223) is a Phosphothreonine. The residue at position 230 (serine 230) is a Phosphoserine. The span at 234 to 248 (SPKETDSNDKDKNND) shows a compositional bias: basic and acidic residues. Positions 249-262 (DLEDLLETTAEDSL) are enriched in acidic residues. Basic and acidic residues predominate over residues 274–286 (SETEHSKEPKSEE). The segment covering 320 to 332 (LSSSKKQETPSSN) has biased composition (polar residues).

In terms of assembly, DNA polymerase delta is a heterotrimer of POL3, POL32 and HYS2. POL32 can form homodimers.

The protein localises to the nucleus. Functionally, DNA polymerase delta (DNA polymerase III) participates in chromosomal DNA replication. It is required during synthesis of the leading and lagging DNA strands at the replication fork and binds at/or near replication origins and moves along DNA with the replication fork. It has 3'-5' proofreading exonuclease activity that correct errors arising during DNA replication. It is also involved in DNA synthesis during DNA repair. In Saccharomyces cerevisiae (strain ATCC 204508 / S288c) (Baker's yeast), this protein is DNA polymerase delta subunit 3 (POL32).